The following is a 225-amino-acid chain: PKHD-type hydroxylase YbiX (225 aa).

The Fe2OG dioxygenase domain occupies 78–177 (TLSTPLFNRY…RVASFMWIQS (100 aa)). Residues histidine 96, aspartate 98, and histidine 158 each coordinate Fe cation. Arginine 168 serves as a coordination point for 2-oxoglutarate.

Requires Fe(2+) as cofactor. L-ascorbate serves as cofactor.

This Escherichia coli (strain SMS-3-5 / SECEC) protein is PKHD-type hydroxylase YbiX.